The sequence spans 257 residues: Thiazole synthase (257 aa).

The active-site Schiff-base intermediate with DXP is the Lys98. Residues Gly159, 185–186 (AG), and 207–208 (NT) each bind 1-deoxy-D-xylulose 5-phosphate.

The protein belongs to the ThiG family. Homotetramer. Forms heterodimers with either ThiH or ThiS.

The protein localises to the cytoplasm. It carries out the reaction [ThiS sulfur-carrier protein]-C-terminal-Gly-aminoethanethioate + 2-iminoacetate + 1-deoxy-D-xylulose 5-phosphate = [ThiS sulfur-carrier protein]-C-terminal Gly-Gly + 2-[(2R,5Z)-2-carboxy-4-methylthiazol-5(2H)-ylidene]ethyl phosphate + 2 H2O + H(+). The protein operates within cofactor biosynthesis; thiamine diphosphate biosynthesis. Functionally, catalyzes the rearrangement of 1-deoxy-D-xylulose 5-phosphate (DXP) to produce the thiazole phosphate moiety of thiamine. Sulfur is provided by the thiocarboxylate moiety of the carrier protein ThiS. In vitro, sulfur can be provided by H(2)S. This is Thiazole synthase from Anaeromyxobacter dehalogenans (strain 2CP-1 / ATCC BAA-258).